Reading from the N-terminus, the 416-residue chain is Chromate transport protein (416 aa).

Residues 1 to 21 (MSVANEESYRPSKATDATTEA) form a disordered region. Transmembrane regions (helical) follow at residues 99–119 (LGGV…MFAL), 128–148 (FVGT…IALI), 160–177 (LLDR…LAAI), 181–198 (DFWI…LLVL), 204–224 (ALLV…WAAP), 237–257 (ASVL…FGGA), 283–303 (LALS…VGYV), 308–328 (IGAV…SLIF), 341–361 (LHAF…ATTI), 371–391 (VPSL…LYAW), and 395–415 (LNVV…FPNQ).

This sequence belongs to the chromate ion transporter (CHR) (TC 2.A.51) family.

The protein resides in the cell inner membrane. This protein reduces chromate accumulation and is essential for chromate resistance. The sequence is that of Chromate transport protein from Pseudomonas aeruginosa.